A 119-amino-acid polypeptide reads, in one-letter code: Large ribosomal subunit protein bL20c (119 aa).

The protein belongs to the bacterial ribosomal protein bL20 family.

The protein localises to the plastid. It is found in the chloroplast. Binds directly to 23S ribosomal RNA and is necessary for the in vitro assembly process of the 50S ribosomal subunit. It is not involved in the protein synthesizing functions of that subunit. This is Large ribosomal subunit protein bL20c from Oedogonium cardiacum (Filamentous green alga).